A 189-amino-acid chain; its full sequence is MARLCAFLMTLLVMSYWSTCSLGCDLPQTHNLRNKRALTLLAQMRRLSPLSCLKDRKNFRFPQEKVDAQQIKKAQVIPVLSELTQQILTLFTSKDSSAAWNTTLLDSFCNDLHQQLNDLQGCLMQQVGVQEPPLTQEDSLLAVRKYFHRITVYLREKKHSPCAWEVVRAEVWRTLSSSAKLLARLSEKE.

The signal sequence occupies residues 1-23; it reads MARLCAFLMTLLVMSYWSTCSLG. Disulfide bonds link C24-C122 and C52-C162. Residue N101 is glycosylated (N-linked (GlcNAc...) asparagine).

The protein belongs to the alpha/beta interferon family.

It is found in the secreted. Functionally, produced by macrophages, IFN-alpha have antiviral activities. Interferon stimulates the production of two enzymes: a protein kinase and an oligoadenylate synthetase. The sequence is that of Interferon alpha-12 (Ifna12) from Mus musculus (Mouse).